A 103-amino-acid chain; its full sequence is Large ribosomal subunit protein bL21 (103 aa).

It belongs to the bacterial ribosomal protein bL21 family. As to quaternary structure, part of the 50S ribosomal subunit. Contacts protein L20.

Its function is as follows. This protein binds to 23S rRNA in the presence of protein L20. The chain is Large ribosomal subunit protein bL21 from Mycobacterium leprae (strain Br4923).